The following is a 207-amino-acid chain: U1 small nuclear ribonucleoprotein C (207 aa).

Residues 4 to 36 form a Matrin-type zinc finger; sequence YYCDYCDTYLTHDSPSVRKQHNAGYKHKANVRI. Composition is skewed to pro residues over residues 105-115 and 122-131; these read PPQGYMPPPGV and PGAPLPPPPQ. A disordered region spans residues 105–207; the sequence is PPQGYMPPPG…PSAESPESNE (103 aa). Low complexity predominate over residues 132-144; it reads NGILRPPGMAPIP. Positions 162 to 183 are enriched in pro residues; sequence GPPPNYNGLPPPPPYHTNPAAP. Over residues 184–207 the composition is skewed to low complexity; the sequence is PSGNFNNPNLNNPNPSAESPESNE.

The protein belongs to the U1 small nuclear ribonucleoprotein C family. As to quaternary structure, U1 snRNP is composed of the 7 core Sm proteins B/B', D1, D2, D3, E, F and G that assemble in a heptameric protein ring on the Sm site of the small nuclear RNA to form the core snRNP, and at least 3 U1 snRNP-specific proteins U1-70K, U1-A and U1-C. U1-C interacts with U1 snRNA and the 5' splice-site region of the pre-mRNA.

The protein localises to the nucleus. Its function is as follows. Component of the spliceosomal U1 snRNP, which is essential for recognition of the pre-mRNA 5' splice-site and the subsequent assembly of the spliceosome. U1-C is directly involved in initial 5' splice-site recognition for both constitutive and regulated alternative splicing. The interaction with the 5' splice-site seems to precede base-pairing between the pre-mRNA and the U1 snRNA. Stimulates commitment or early (E) complex formation by stabilizing the base pairing of the 5' end of the U1 snRNA and the 5' splice-site region. This is U1 small nuclear ribonucleoprotein C from Arabidopsis thaliana (Mouse-ear cress).